Here is a 1567-residue protein sequence, read N- to C-terminus: ABC multidrug transporter MDR1 (1567 aa).

Positions 1-11 (MASQPPQPPSG) are enriched in pro residues. A disordered region spans residues 1 to 37 (MASQPPQPPSGQPDTQYEEYQSEVITETTNRPTPAAD). Residues 22-32 (SEVITETTNRP) are compositionally biased toward polar residues. N-linked (GlcNAc...) asparagine glycans are attached at residues asparagine 149, asparagine 157, and asparagine 356. Residues 167–432 (VQYQDTFLSP…FEEMGWYCPP (266 aa)) enclose the ABC transporter 1 domain. Transmembrane regions (helical) follow at residues 543–563 (STIA…SLFF), 571–591 (GFFA…LMSI), 636–656 (IPIK…LGGL), 661–681 (AKFF…SAIF), 691–711 (IPQA…YTGF), and 798–818 (LGIL…VSEL). 3 N-linked (GlcNAc...) asparagine glycosylation sites follow: asparagine 819, asparagine 895, and asparagine 912. One can recognise an ABC transporter 2 domain in the interval 891-1134 (FTWRNVTYDI…LLNYFETHGA (244 aa)). Residue 927-934 (GVSGAGKT) participates in ATP binding. Positions 1172–1202 (ESRHVQQELDRIQSETSKRNEGHGQSAEKEP) are disordered. A helical membrane pass occupies residues 1231–1251 (IWGKLLLGLASALFIGFSFFL). Asparagine 1253 is a glycosylation site (N-linked (GlcNAc...) asparagine). Transmembrane regions (helical) follow at residues 1257 to 1277 (AGLQ…SSLV), 1305 to 1325 (VFLL…GIIA), 1345 to 1365 (ILLL…QMII), 1372 to 1392 (ETAG…NGVL), and 1498 to 1518 (GIGW…YYLI).

Belongs to the ABC transporter superfamily. ABCG family. PDR (TC 3.A.1.205) subfamily.

It localises to the cell membrane. It carries out the reaction voriconazole(in) + ATP + H2O = voriconazole(out) + ADP + phosphate + H(+). The enzyme catalyses fluconazole(in) + ATP + H2O = fluconazole(out) + ADP + phosphate + H(+). It catalyses the reaction (R)-miconazole(in) + ATP + H2O = (R)-miconazole(out) + ADP + phosphate + H(+). The catalysed reaction is (S)-miconazole(in) + ATP + H2O = (S)-miconazole(out) + ADP + phosphate + H(+). Pleiotropic ABC efflux transporter that may be involved in the modulation susceptibility to a wide range of unrelated cytotoxic compounds, including ethidium bromide, ketoconazole, cycloheximide, fluconazole, griseofulvin, imazalil and itraconazole. This chain is ABC multidrug transporter MDR1, found in Trichophyton interdigitale (strain MR816).